The sequence spans 550 residues: Zinc finger protein 382 (550 aa).

The segment at 1–105 is mediates interaction with TRIM28; sequence MPLQGSVSFK…RHSRPLIFIN (105 aa). Represses transcription stretches follow at residues 5-46 and 70-211; these read GSVS…FVSV and IFPS…PEQP. Residues 7–78 enclose the KRAB domain; it reads VSFKDVTVDF…RIFPSYSYLE (72 aa). The C2H2-type 1; degenerate zinc-finger motif lies at 212 to 234; it reads FDHNECEKSFLMKGMLFTHTRAH. C2H2-type zinc fingers lie at residues 296–318, 324–346, 352–374, 380–402, 408–430, 436–458, 464–486, 492–514, and 520–542; these read FHCPYCGNNFRRKSYLIEHQRIH, YVCNQCGKAFRQKTALTLHEKTH, FICIDCGKSFRQKATLTRHHKTH, YECPQCGSAFRKKSYLIDHQRTH, YQCNECGKAFIQKTTLTVHQRTH, YICNECGKSFCQKTTLTLHQRIH, YICNECGKSFRQKAILTVHHRIH, NGCPQCGKAFSRKSNLIRHQKTH, and YECKQCGKFFSCKSNLIVHQKTH. Residues 296 to 550 are required for transcriptional repression activity; probably mediates sequence-specific DNA-binding; the sequence is FHCPYCGNNF…THKVETTGIQ (255 aa).

Belongs to the krueppel C2H2-type zinc-finger protein family. Interacts with TRIM28; enhances the transcriptional repressor activity. As to expression, specifically expressed in heart with a weaker expression also detected in skeletal muscle.

It is found in the nucleus. Its function is as follows. Functions as a sequence-specific transcriptional repressor. The chain is Zinc finger protein 382 (ZNF382) from Homo sapiens (Human).